A 357-amino-acid polypeptide reads, in one-letter code: Holliday junction branch migration complex subunit RuvB (357 aa).

The segment at 1-27 (MGRFSNADGPGDDADEREVTPALTVGE) is disordered. The large ATPase domain (RuvB-L) stretch occupies residues 1–195 (MGRFSNADGP…FGFTAHMDFY (195 aa)). Residues Leu-34, Arg-35, Gly-76, Lys-79, Thr-80, Ser-81, 142-144 (EDF), Arg-185, Tyr-195, and Arg-232 each bind ATP. Thr-80 is a binding site for Mg(2+). The interval 196 to 266 (EPAELERVLA…IAKYALEVYD (71 aa)) is small ATPAse domain (RuvB-S). The segment at 269-357 (ELGLDRLDRA…GGLGQVGLFE (89 aa)) is head domain (RuvB-H). DNA-binding residues include Arg-324 and Arg-329.

This sequence belongs to the RuvB family. Homohexamer. Forms an RuvA(8)-RuvB(12)-Holliday junction (HJ) complex. HJ DNA is sandwiched between 2 RuvA tetramers; dsDNA enters through RuvA and exits via RuvB. An RuvB hexamer assembles on each DNA strand where it exits the tetramer. Each RuvB hexamer is contacted by two RuvA subunits (via domain III) on 2 adjacent RuvB subunits; this complex drives branch migration. In the full resolvosome a probable DNA-RuvA(4)-RuvB(12)-RuvC(2) complex forms which resolves the HJ.

The protein resides in the cytoplasm. It carries out the reaction ATP + H2O = ADP + phosphate + H(+). Its function is as follows. The RuvA-RuvB-RuvC complex processes Holliday junction (HJ) DNA during genetic recombination and DNA repair, while the RuvA-RuvB complex plays an important role in the rescue of blocked DNA replication forks via replication fork reversal (RFR). RuvA specifically binds to HJ cruciform DNA, conferring on it an open structure. The RuvB hexamer acts as an ATP-dependent pump, pulling dsDNA into and through the RuvAB complex. RuvB forms 2 homohexamers on either side of HJ DNA bound by 1 or 2 RuvA tetramers; 4 subunits per hexamer contact DNA at a time. Coordinated motions by a converter formed by DNA-disengaged RuvB subunits stimulates ATP hydrolysis and nucleotide exchange. Immobilization of the converter enables RuvB to convert the ATP-contained energy into a lever motion, pulling 2 nucleotides of DNA out of the RuvA tetramer per ATP hydrolyzed, thus driving DNA branch migration. The RuvB motors rotate together with the DNA substrate, which together with the progressing nucleotide cycle form the mechanistic basis for DNA recombination by continuous HJ branch migration. Branch migration allows RuvC to scan DNA until it finds its consensus sequence, where it cleaves and resolves cruciform DNA. The polypeptide is Holliday junction branch migration complex subunit RuvB (Mycolicibacterium gilvum (strain PYR-GCK) (Mycobacterium gilvum (strain PYR-GCK))).